The following is a 269-amino-acid chain: uncharacterized protein (269 aa).

Pro residues predominate over residues 1–16 (MTDVPSKPPQTTPPPK). 2 disordered regions span residues 1-110 (MTDV…TISG) and 157-269 (ILQQ…PTIQ). Polar residues predominate over residues 21–45 (APTTIFSSPPQLPDRSSLNISHTAS). Low complexity predominate over residues 46 to 58 (TPTLTPTPLQQQQ). The segment covering 80-93 (SFSNSPNRQTQSFI) has biased composition (polar residues). Positions 159–181 (QQPQQSHSPQQQQQQHTPNHQQP) are enriched in low complexity. The segment covering 182 to 195 (LSPQQQKDLAQKRS) has biased composition (polar residues). Over residues 198-213 (PLPPRPNKNRPLPTPI) the composition is skewed to pro residues.

This is an uncharacterized protein from Dictyostelium discoideum (Social amoeba).